Consider the following 291-residue polypeptide: Oligopeptide transport system permease protein OppC (291 aa).

6 consecutive transmembrane segments (helical) span residues 22-42 (VASL…PPLL), 85-105 (MLIG…VGAI), 116-136 (TLMW…IAIV), 142-162 (NSAN…MISS), 209-229 (ALNV…GFGI), and 247-267 (ATAF…ILVC). The ABC transmembrane type-1 domain maps to 81-272 (MQKSMLIGVC…LILVCANLTG (192 aa)).

The protein belongs to the binding-protein-dependent transport system permease family. OppBC subfamily. The complex is composed of an ATP-binding protein (OppD), two transmembrane proteins (OppB and OppC) and a solute-binding protein (OppA).

The protein localises to the cell inner membrane. Part of the ABC transporter complex OppABCD involved in the uptake of oligopeptides. Responsible for the translocation of the substrate across the membrane. This chain is Oligopeptide transport system permease protein OppC, found in Mycobacterium bovis (strain ATCC BAA-935 / AF2122/97).